A 251-amino-acid polypeptide reads, in one-letter code: MLAKRIIPCLDVRDGRVVKGINFEGLRDAGSILEQARFYNGELADELVFLDISASLESRKTTLGEVLKVSEEVFIPLTVGGGISSVERAHDAFMHGADKVSVNTAAIATPELISRIAEKFGSQAVVVAIDVKKVGNDYIVHTHSGKKPTQYEAMEWAHKVEKLGAGEILLTSMDRDGTKSGYDNVILKAISTSVNIPVIASGGAGNLEHLYQGFAEGHADAALAASIFHFRQYSIREAKTYLRERGIVVRL.

Catalysis depends on residues Asp-11 and Asp-130.

It belongs to the HisA/HisF family. Heterodimer of HisH and HisF.

Its subcellular location is the cytoplasm. It catalyses the reaction 5-[(5-phospho-1-deoxy-D-ribulos-1-ylimino)methylamino]-1-(5-phospho-beta-D-ribosyl)imidazole-4-carboxamide + L-glutamine = D-erythro-1-(imidazol-4-yl)glycerol 3-phosphate + 5-amino-1-(5-phospho-beta-D-ribosyl)imidazole-4-carboxamide + L-glutamate + H(+). It participates in amino-acid biosynthesis; L-histidine biosynthesis; L-histidine from 5-phospho-alpha-D-ribose 1-diphosphate: step 5/9. Functionally, IGPS catalyzes the conversion of PRFAR and glutamine to IGP, AICAR and glutamate. The HisF subunit catalyzes the cyclization activity that produces IGP and AICAR from PRFAR using the ammonia provided by the HisH subunit. The polypeptide is Imidazole glycerol phosphate synthase subunit HisF (Prosthecochloris aestuarii (strain DSM 271 / SK 413)).